The sequence spans 274 residues: Large ribosomal subunit protein uL2 (274 aa).

The tract at residues 223-265 is disordered; sequence VVMNPVDHPHGGGEGRTSGGRHPVSPWGMPTKGFKTRKNKRTD. Over residues 256-265 the composition is skewed to basic residues; that stretch reads FKTRKNKRTD.

Belongs to the universal ribosomal protein uL2 family. In terms of assembly, part of the 50S ribosomal subunit. Forms a bridge to the 30S subunit in the 70S ribosome.

Functionally, one of the primary rRNA binding proteins. Required for association of the 30S and 50S subunits to form the 70S ribosome, for tRNA binding and peptide bond formation. It has been suggested to have peptidyltransferase activity; this is somewhat controversial. Makes several contacts with the 16S rRNA in the 70S ribosome. This is Large ribosomal subunit protein uL2 from Vibrio parahaemolyticus serotype O3:K6 (strain RIMD 2210633).